The chain runs to 909 residues: Protein translocase subunit SecA (909 aa).

Residues glutamine 87, 105–109 (GEGKT), and aspartate 507 contribute to the ATP site. The segment at 857–909 (DTHSELAEEQPPVAENRENKQQPFVRKNEKVGRNDPCPCGSGKKYKQCHGKLN) is disordered. Positions 871 to 889 (ENRENKQQPFVRKNEKVGR) are enriched in basic and acidic residues. Zn(2+) contacts are provided by cysteine 893, cysteine 895, cysteine 904, and histidine 905. The span at 899–909 (KKYKQCHGKLN) shows a compositional bias: basic residues.

Belongs to the SecA family. Monomer and homodimer. Part of the essential Sec protein translocation apparatus which comprises SecA, SecYEG and auxiliary proteins SecDF-YajC and YidC. Zn(2+) is required as a cofactor.

The protein localises to the cell inner membrane. It is found in the cytoplasm. The catalysed reaction is ATP + H2O + cellular proteinSide 1 = ADP + phosphate + cellular proteinSide 2.. Part of the Sec protein translocase complex. Interacts with the SecYEG preprotein conducting channel. Has a central role in coupling the hydrolysis of ATP to the transfer of proteins into and across the cell membrane, serving both as a receptor for the preprotein-SecB complex and as an ATP-driven molecular motor driving the stepwise translocation of polypeptide chains across the membrane. The polypeptide is Protein translocase subunit SecA (Nitrosomonas europaea (strain ATCC 19718 / CIP 103999 / KCTC 2705 / NBRC 14298)).